Reading from the N-terminus, the 254-residue chain is Sulfoacetaldehyde reductase (254 aa).

Position 8 to 32 (F8 to V32) interacts with NADP(+). S141 lines the substrate pocket. The active-site Proton acceptor is Y154.

This sequence belongs to the short-chain dehydrogenases/reductases (SDR) family. As to quaternary structure, homodimer and heterotetramer.

It catalyses the reaction 2-hydroxyethane-1-sulfonate + NADP(+) = sulfoacetaldehyde + NADPH + H(+). Its pathway is organosulfur degradation. Functionally, catalyzes the formation of isethionate from 2-sulfoacetaldehyde in the deaminative pathway of taurine. The enzyme is specific for NADPH; NADH is not a substrate. In Klebsiella oxytoca, this protein is Sulfoacetaldehyde reductase (isfD).